A 469-amino-acid chain; its full sequence is Transcription factor phomD (469 aa).

Residues 14-41 constitute a DNA-binding region (zn(2)-C6 fungal-type); it reads CNACNESKVRCSQRKPTCARCERNGVEC. The interval 49–118 is disordered; it reads THKDAPPISM…QQKEEAAAAA (70 aa). The span at 82–93 shows a compositional bias: polar residues; that stretch reads KANSNSSSNWHM. Residues 104-118 show a composition bias toward low complexity; sequence QQQQQQQKEEAAAAA.

Its subcellular location is the nucleus. Its function is as follows. Transcription factor; part of the gene cluster that mediates the biosynthesis of the phomopsins, a group of hexapeptide mycotoxins which infects lupins and causes lupinosis disease in livestock. May play a role in the regulation of the production of phomopsins. The sequence is that of Transcription factor phomD from Diaporthe leptostromiformis (Lupinosis disease fungus).